We begin with the raw amino-acid sequence, 208 residues long: Glutathione S-transferase 1 (208 aa).

A GST N-terminal domain is found at 1-80 (MDFYYLPGSA…YLVEKYGKTD (80 aa)). Residues Ser-9, 50 to 52 (HTI), and 64 to 66 (ESR) each bind glutathione. One can recognise a GST C-terminal domain in the interval 86-207 (CPKKRAVINQ…AGCLEFKKYF (122 aa)).

Belongs to the GST superfamily. Theta family. Homodimer.

The catalysed reaction is RX + glutathione = an S-substituted glutathione + a halide anion + H(+). Its function is as follows. Conjugation of reduced glutathione to a wide number of exogenous and endogenous hydrophobic electrophiles. The polypeptide is Glutathione S-transferase 1 (Gst1) (Musca domestica (House fly)).